Consider the following 502-residue polypeptide: Glycerol kinase (502 aa).

Thr14 serves as a coordination point for ADP. ATP-binding residues include Thr14, Thr15, and Ser16. Thr14 provides a ligand contact to sn-glycerol 3-phosphate. Arg18 is an ADP binding site. 3 residues coordinate sn-glycerol 3-phosphate: Arg84, Glu85, and Tyr136. Residues Arg84, Glu85, and Tyr136 each coordinate glycerol. His232 bears the Phosphohistidine; by HPr mark. Residue Asp246 coordinates sn-glycerol 3-phosphate. 2 residues coordinate glycerol: Asp246 and Gln247. ADP is bound by residues Thr268 and Gly311. Residues Thr268, Gly311, Gln315, and Gly412 each contribute to the ATP site. The ADP site is built by Gly412 and Asn416.

This sequence belongs to the FGGY kinase family. In terms of assembly, homotetramer and homodimer (in equilibrium). Post-translationally, the phosphoenolpyruvate-dependent sugar phosphotransferase system (PTS), including enzyme I, and histidine-containing protein (HPr) are required for the phosphorylation, which leads to the activation of the enzyme.

The catalysed reaction is glycerol + ATP = sn-glycerol 3-phosphate + ADP + H(+). Its pathway is polyol metabolism; glycerol degradation via glycerol kinase pathway; sn-glycerol 3-phosphate from glycerol: step 1/1. Its activity is regulated as follows. Activated by phosphorylation and inhibited by fructose 1,6-bisphosphate (FBP). In terms of biological role, key enzyme in the regulation of glycerol uptake and metabolism. Catalyzes the phosphorylation of glycerol to yield sn-glycerol 3-phosphate. This chain is Glycerol kinase, found in Streptococcus pneumoniae serotype 19F (strain G54).